A 314-amino-acid chain; its full sequence is GDSL-like esterase Rv1075c (314 aa).

The signal sequence occupies residues 1-21 (MPRRSTIALATAGALASTGTA). Residue Ser80 is the Nucleophile of the active site. The active-site Proton donor is Asp244. The Proton acceptor role is filled by His247. The interval 276–314 (IHETPSRPGTATLEPGHTRHSMMSRLRRPRPARAVPTGG) is disordered. Over residues 293 to 306 (TRHSMMSRLRRPRP) the composition is skewed to basic residues.

It belongs to the 'GDSL' lipolytic enzyme family.

It carries out the reaction an acetyl ester + H2O = an aliphatic alcohol + acetate + H(+). The enzyme catalyses a butanoate ester + H2O = an aliphatic alcohol + butanoate + H(+). The catalysed reaction is triacetin + H2O = diacetylglycerol + acetate + H(+). It catalyses the reaction 1,2,3-tributanoylglycerol + H2O = dibutanoylglycerol + butanoate + H(+). Esterase activity is significantly inhibited by the serine modifier phenylmethylsulfonyl fluoride (PMSF). Completely inhibited by diethyl pyrocarbonate. In terms of biological role, esterase that preferentially hydrolyzes short-chain fatty acids, particularly pNP-acetate (C2) and pNP-butyrate (C4). Also has weak activity with pNP-hexanoate (C6) and pNP-octanoate (C8). It can also hydrolyze short-chain tryglycerides such as triacetin and tributyrin. Important for intracellular survival. The chain is GDSL-like esterase Rv1075c from Mycobacterium tuberculosis (strain ATCC 25618 / H37Rv).